The sequence spans 182 residues: Thioredoxin X, chloroplastic (182 aa).

Residues 1-67 constitute a chloroplast transit peptide; sequence MDSIVSSSTI…TRKSSSSVIR (67 aa). In terms of domain architecture, Thioredoxin spans 68 to 177; that stretch reads CGGIKEIGES…LKEYIDGLLN (110 aa). Catalysis depends on nucleophile residues Cys99 and Cys102. The cysteines at positions 99 and 102 are disulfide-linked.

It belongs to the thioredoxin family. As to expression, predominantly expressed in leaves.

The protein resides in the plastid. Its subcellular location is the chloroplast stroma. Functionally, probable thiol-disulfide oxidoreductase that may participate in various redox reactions. This chain is Thioredoxin X, chloroplastic (ATHX), found in Arabidopsis thaliana (Mouse-ear cress).